The primary structure comprises 734 residues: Amino-acid acetyltransferase, mitochondrial (734 aa).

A disordered region spans residues 384-433; it reads YSETSSRSTRAEADSNFNLRDDIPLSSFTEQKSGELEYSPRHQNDSPTQQ. Composition is skewed to basic and acidic residues over residues 392–406 and 415–427; these read TRAE…RDDI and KSGE…RHQN. An N-acetyltransferase domain is found at 555-724; sequence GVPQISLTDP…YEAVCKTIEP (170 aa).

It belongs to the acetyltransferase family.

Its subcellular location is the mitochondrion. The catalysed reaction is L-glutamate + acetyl-CoA = N-acetyl-L-glutamate + CoA + H(+). It functions in the pathway amino-acid biosynthesis; L-arginine biosynthesis; N(2)-acetyl-L-ornithine from L-glutamate: step 1/4. Functionally, N-acetylglutamate synthase involved in arginine biosynthesis. This Botryotinia fuckeliana (strain B05.10) (Noble rot fungus) protein is Amino-acid acetyltransferase, mitochondrial (arg2).